The following is a 311-amino-acid chain: Putative RNA-binding protein R05D3.8 (311 aa).

One can recognise an RRM domain in the interval 155–235 (KRLFVSYFPL…RRAVLKESVK (81 aa)). A compositionally biased stretch (polar residues) spans 261–270 (TPSRPVTSVH). The interval 261-311 (TPSRPVTSVHASSSASSNHYDPSAAAGYAPLYHQPPESDPLSQCGYGPRKW) is disordered.

In Caenorhabditis elegans, this protein is Putative RNA-binding protein R05D3.8.